We begin with the raw amino-acid sequence, 1252 residues long: DNA-directed RNA polymerase subunit beta (1252 aa).

This sequence belongs to the RNA polymerase beta chain family. As to quaternary structure, the RNAP catalytic core consists of 2 alpha, 1 beta, 1 beta' and 1 omega subunit. When a sigma factor is associated with the core the holoenzyme is formed, which can initiate transcription.

It catalyses the reaction RNA(n) + a ribonucleoside 5'-triphosphate = RNA(n+1) + diphosphate. Its function is as follows. DNA-dependent RNA polymerase catalyzes the transcription of DNA into RNA using the four ribonucleoside triphosphates as substrates. This Chlamydia felis (strain Fe/C-56) (Chlamydophila felis) protein is DNA-directed RNA polymerase subunit beta.